A 372-amino-acid chain; its full sequence is MPSDRDHDAGIFAFFGAVPRSDRCRQTRGGGEVVDGSSVFGHVPVFAQRCVTLLAPALTRHHADGSNAILVDATLGVGGHAERFLTEFPGLRLIGLDRDPSALDIARTRLMRFADRVTLIHTRYDNLAVALNKFGYAAVESVDGVLFDLGVSSMQLDCAERGFSYAQDVPLDMRMDPWSPVSAADIVNNYDEAALADILRRYGEERFARRIAAHIVRRRAHTPFTSTAELVALLYQAIPAPARRIGGHPAKRTFQALRIAVNDELNSLSNVLPAALDALTVAGRLVVLAYQSLEDRIVKRVFADAVSSRTPAGLPIELPGHGPRFRLLTRGAEHADAAEIECNPRSAAVRLRALQRTQHGVEPQQPTRRGDS.

Residues 78 to 80, Asp-97, Tyr-124, Asp-148, and Gln-155 each bind S-adenosyl-L-methionine; that span reads GGH.

Belongs to the methyltransferase superfamily. RsmH family.

It localises to the cytoplasm. The enzyme catalyses cytidine(1402) in 16S rRNA + S-adenosyl-L-methionine = N(4)-methylcytidine(1402) in 16S rRNA + S-adenosyl-L-homocysteine + H(+). Its function is as follows. Specifically methylates the N4 position of cytidine in position 1402 (C1402) of 16S rRNA. This is Ribosomal RNA small subunit methyltransferase H from Mycobacterium leprae (strain Br4923).